A 496-amino-acid chain; its full sequence is L-arabinose isomerase (496 aa).

Residues Glu305, Glu330, His347, and His446 each coordinate Mn(2+).

Belongs to the arabinose isomerase family. Requires Mn(2+) as cofactor.

The catalysed reaction is beta-L-arabinopyranose = L-ribulose. The protein operates within carbohydrate degradation; L-arabinose degradation via L-ribulose; D-xylulose 5-phosphate from L-arabinose (bacterial route): step 1/3. In terms of biological role, catalyzes the conversion of L-arabinose to L-ribulose. This is L-arabinose isomerase from Bacillus subtilis (strain 168).